Consider the following 313-residue polypeptide: 4-diphosphocytidyl-2-C-methyl-D-erythritol kinase (313 aa).

The active site involves lysine 29. 113–123 (PMGGGVGGGSS) serves as a coordination point for ATP. The active site involves aspartate 155.

Belongs to the GHMP kinase family. IspE subfamily.

It catalyses the reaction 4-CDP-2-C-methyl-D-erythritol + ATP = 4-CDP-2-C-methyl-D-erythritol 2-phosphate + ADP + H(+). It functions in the pathway isoprenoid biosynthesis; isopentenyl diphosphate biosynthesis via DXP pathway; isopentenyl diphosphate from 1-deoxy-D-xylulose 5-phosphate: step 3/6. In terms of biological role, catalyzes the phosphorylation of the position 2 hydroxy group of 4-diphosphocytidyl-2C-methyl-D-erythritol. This is 4-diphosphocytidyl-2-C-methyl-D-erythritol kinase from Haemophilus influenzae (strain 86-028NP).